The chain runs to 83 residues: CLAVATA3/ESR (CLE)-related protein 20 (83 aa).

The signal sequence occupies residues 1–29 (MKNKNMNPSRPRLLCLIVFLFLVIVLSKA).

The protein belongs to the CLV3/ESR signal peptide family. In terms of tissue distribution, mostly expressed in roots, seedlings, leaves, flowers, stems and apex, and, to a lower extent, in siliques and pollen.

It localises to the secreted. The protein localises to the extracellular space. Functionally, extracellular signal peptide that regulates cell fate. Represses root apical meristem maintenance. Inhibits irreversibly root growth by reducing cell division rates in the root apical meristem. Regulates the transition of protophloem cells from proliferation to differentiation, thus impinging on postembryonic growth capacity of the root meristem; this signaling pathway requires CRN and CLV2. This chain is CLAVATA3/ESR (CLE)-related protein 20, found in Arabidopsis thaliana (Mouse-ear cress).